Reading from the N-terminus, the 131-residue chain is Probable flagellum biosynthesis repressor protein FlbT (131 aa).

Belongs to the FlbT family.

In terms of biological role, has a post-transcriptional repressor function in flagellum biogenesis. Associates with the 5'-UTR of fljK mRNA and promotes its degradation. The sequence is that of Probable flagellum biosynthesis repressor protein FlbT from Caulobacter sp. (strain K31).